The sequence spans 166 residues: Protein-export protein SecB (166 aa).

Belongs to the SecB family. In terms of assembly, homotetramer, a dimer of dimers. One homotetramer interacts with 1 SecA dimer.

Its subcellular location is the cytoplasm. Its function is as follows. One of the proteins required for the normal export of preproteins out of the cell cytoplasm. It is a molecular chaperone that binds to a subset of precursor proteins, maintaining them in a translocation-competent state. It also specifically binds to its receptor SecA. In Cereibacter sphaeroides (strain ATCC 17025 / ATH 2.4.3) (Rhodobacter sphaeroides), this protein is Protein-export protein SecB.